The following is a 619-amino-acid chain: Nuclear hormone receptor family member nhr-6 (619 aa).

Residues 1 to 18 (MEQLSIQTDELQDQFSNC) are compositionally biased toward polar residues. 4 disordered regions span residues 1–29 (MEQL…SYSS), 58–86 (MSKN…SKTT), 103–134 (QVNT…HRLP), and 196–232 (QHFP…PTSP). A compositionally biased stretch (low complexity) spans 19-29 (SPASVDSSYSS). A compositionally biased stretch (polar residues) spans 125–134 (KPSSSSHRLP). Over residues 206-232 (GSQGTTSSSNNTGGTPSPHSSSLPTSP) the composition is skewed to low complexity. The segment at residues 265–340 (DKMCAVCNDR…VGMVKEIVRH (76 aa)) is a DNA-binding region (nuclear receptor). NR C4-type zinc fingers lie at residues 268-288 (CAVC…CEGC) and 304-328 (CAGN…YQKC). The interval 345–365 (GRRGRLSSKTKLARSEDQPSP) is disordered. Over residues 346–356 (RRGRLSSKTKL) the composition is skewed to basic residues. The region spanning 365-600 (PPLPLLALMG…STDAPPACGS (236 aa)) is the NR LBD domain. An AF-2 region spans residues 589-600 (LRSTDAPPACGS).

The protein belongs to the nuclear hormone receptor family. NR4 subfamily. In hermaphrodites, expressed in the developing spermatheca and dorsal uterus. Expression includes the 8 cells of the dorsal somatic gonad primordium and the sujc cells that form the core of the spermatheca-uterine valve. Expressed in the precursor cells of the spermatheca-sheath lineages (SS cells) and in the precursors and descendents of the dorsal-uterine lineage (DU cells). In both hermaphroditic and male animals, expressed in a pair of head chemosensory neurons.

Its subcellular location is the nucleus. Its function is as follows. Transcriptional activator that induces gene expression by binding to the NGFI-B response element (NBRE) 5'-AAAGGTCA-3'. Required for proper morphogenesis of the spermatheca and the spermatheca-uterine valve formation. Promotes cell proliferation and differentiation of the spermatheca precursor cells during spermatheca development in larval stage L4. Might play a role in promoting G1/S phase progression in the spermatheca precursor cell lineage. Also required for the differentiation of the spermatheca-uterine junction core (sujc) cells which are generating the spermatheca-uterine valve. The sequence is that of Nuclear hormone receptor family member nhr-6 (nhr-6) from Caenorhabditis elegans.